Consider the following 141-residue polypeptide: Hemoglobin subunit alpha-2 (141 aa).

Residues 1–141 form the Globin domain; sequence VLSSQDKANV…VKHVLTSKYR (141 aa). Residue histidine 58 coordinates O2. Histidine 87 serves as a coordination point for heme b.

This sequence belongs to the globin family. Minor hemoglobin is a heterotetramer of two alpha-2 chains and two beta-2 chains. Red blood cells.

In terms of biological role, involved in oxygen transport from the lung to the various peripheral tissues. In Triturus cristatus (Great crested newt), this protein is Hemoglobin subunit alpha-2.